Consider the following 148-residue polypeptide: Large ribosomal subunit protein uL15 (148 aa).

Residues 1-12 (MSDPIKLHDLRP) are compositionally biased toward basic and acidic residues. The disordered stretch occupies residues 1-45 (MSDPIKLHDLRPAKGANKAKTRVGRGEASKGKTAGRGTKGTKARN).

Belongs to the universal ribosomal protein uL15 family. Part of the 50S ribosomal subunit.

Functionally, binds to the 23S rRNA. This Corynebacterium urealyticum (strain ATCC 43042 / DSM 7109) protein is Large ribosomal subunit protein uL15.